A 422-amino-acid chain; its full sequence is Probable isoprenylcysteine alpha-carbonyl methylesterase ICMEL2 (422 aa).

Residues 1 to 16 (MQLSPERCRPMSENRE) show a composition bias toward basic and acidic residues. Positions 1–55 (MQLSPERCRPMSENREAWSANSEEMELLHGSNRLSSPEHVRRRVSGNSSEDGSPR) are disordered. The next 2 membrane-spanning stretches (helical) occupy residues 97–117 (LLALACYAMLLMPGFLQVAYL) and 152–172 (VVVFVTGGAWIIGYKAWGSLL). Residues 158–160 (GGA) and 229–231 (QSA) contribute to the substrate site. Residues S230, D331, and H363 contribute to the active site.

Belongs to the AB hydrolase superfamily. Isoprenylcysteine methylesterase family. As to expression, expressed at low levels in flowers and siliques.

The protein resides in the endoplasmic reticulum membrane. It is found in the golgi apparatus membrane. It catalyses the reaction [protein]-C-terminal S-[(2E,6E)-farnesyl]-L-cysteine methyl ester + H2O = [protein]-C-terminal S-[(2E,6E)-farnesyl]-L-cysteine + methanol + H(+). Its function is as follows. Catalyzes the demethylation of isoprenylcysteine methylesters. May act as a negative regulator of ABA signaling. The chain is Probable isoprenylcysteine alpha-carbonyl methylesterase ICMEL2 from Arabidopsis thaliana (Mouse-ear cress).